The following is a 773-amino-acid chain: Mitochondrial inner membrane m-AAA protease component yta12 (773 aa).

Residues 83 to 119 are disordered; it reads FSVTSKRSQNGSSGSNSDANGRKNGQKNDDSKKKGLN. Residues 87-101 show a composition bias toward low complexity; that stretch reads SKRSQNGSSGSNSDA. The next 2 membrane-spanning stretches (helical) occupy residues 126–146 and 239–259; these read VFEI…AYIL and VLAT…VIYL. Val-298, Ala-299, Thr-340, Gly-341, Lys-342, Thr-343, Leu-344, and His-479 together coordinate ATP. His-561 contributes to the Zn(2+) binding site. Glu-562 is an active-site residue. Zn(2+) is bound by residues His-565 and Asp-638. A disordered region spans residues 752–773; that stretch reads EYKNDHDPRNPPIPPSPQQPSA. The span at 761 to 773 shows a compositional bias: pro residues; sequence NPPIPPSPQQPSA.

In the N-terminal section; belongs to the AAA ATPase family. The protein in the C-terminal section; belongs to the peptidase M41 family. As to quaternary structure, component of the m-AAA protease complex. It depends on Zn(2+) as a cofactor.

The protein localises to the mitochondrion membrane. It carries out the reaction ATP + H2O = ADP + phosphate + H(+). Functionally, catalytic component of the m-AAA protease, a protease that plays a key role in proteostasis of inner mitochondrial membrane proteins. Possesses both ATPase and protease activities: the ATPase activity is required to unfold substrates, threading them into the internal proteolytic cavity for hydrolysis into small peptide fragments. The complex is necessary for the assembly of mitochondrial respiratory chain and ATPase complexes. The m-AAA protease carries out protein quality control in the inner membrane of the mitochondria by mediating degradation of mistranslated or misfolded polypeptides. It also mediates protein maturation of the mitochondrial ribosomal subunit mrpl32/bL32m by catalyzing the cleavage of the presequence of mrpl32/bL32m prior to assembly into the mitochondrial ribosome. Also acts as a membrane protein dislocase: required to dislocate moderately hydrophobic transmembrane segments from the membrane. The sequence is that of Mitochondrial inner membrane m-AAA protease component yta12 (yta12) from Schizosaccharomyces pombe (strain 972 / ATCC 24843) (Fission yeast).